The sequence spans 117 residues: Protein Wnt-6 (117 aa).

A lipid anchor (O-palmitoleoyl serine; by PORCN) is attached at Ser-1. A disulfide bridge links Cys-83 with Cys-98. Residue Asn-84 is glycosylated (N-linked (GlcNAc...) asparagine).

This sequence belongs to the Wnt family. Post-translationally, palmitoleoylation is required for efficient binding to frizzled receptors. Depalmitoleoylation leads to Wnt signaling pathway inhibition.

The protein localises to the secreted. It localises to the extracellular space. The protein resides in the extracellular matrix. Functionally, ligand for members of the frizzled family of seven transmembrane receptors. Probable developmental protein. May be a signaling molecule which affects the development of discrete regions of tissues. Is likely to signal over only few cell diameters. The chain is Protein Wnt-6 (WNT-6) from Plethodon jordani (Red-cheeked salamander).